Here is a 303-residue protein sequence, read N- to C-terminus: N-acetylmuramic acid 6-phosphate etherase (303 aa).

Residues 1-21 (MQPSQLRSLTTESRNPNTMGI) form a disordered region. In terms of domain architecture, SIS spans 58 to 221 (AYDSISNGGR…STSVMIRQGK (164 aa)). Glu-86 serves as the catalytic Proton donor. Glu-117 is an active-site residue.

It belongs to the GCKR-like family. MurNAc-6-P etherase subfamily. Homodimer.

The enzyme catalyses N-acetyl-D-muramate 6-phosphate + H2O = N-acetyl-D-glucosamine 6-phosphate + (R)-lactate. It participates in amino-sugar metabolism; N-acetylmuramate degradation. In terms of biological role, specifically catalyzes the cleavage of the D-lactyl ether substituent of MurNAc 6-phosphate, producing GlcNAc 6-phosphate and D-lactate. The protein is N-acetylmuramic acid 6-phosphate etherase of Bacillus pumilus (strain SAFR-032).